Here is a 71-residue protein sequence, read N- to C-terminus: Large ribosomal subunit protein uL29 (71 aa).

The protein belongs to the universal ribosomal protein uL29 family.

The polypeptide is Large ribosomal subunit protein uL29 (Rickettsia africae (strain ESF-5)).